Here is an 802-residue protein sequence, read N- to C-terminus: Aldehyde dehydrogenase family 16 member A1 (802 aa).

The interval 513–554 is disordered; that stretch reads SLPSGPETGPSPAPPYGLFVRGRFQSPGTQSSRPIKDSSGKV.

It belongs to the aldehyde dehydrogenase family. In terms of assembly, interacts with SPG21.

The polypeptide is Aldehyde dehydrogenase family 16 member A1 (Aldh16a1) (Rattus norvegicus (Rat)).